Here is a 208-residue protein sequence, read N- to C-terminus: Uracil phosphoribosyltransferase (208 aa).

Residues R78, R103, and 130-138 (DPMLATGGS) contribute to the 5-phospho-alpha-D-ribose 1-diphosphate site. Uracil-binding positions include I193 and 198–200 (GDA). D199 provides a ligand contact to 5-phospho-alpha-D-ribose 1-diphosphate.

Belongs to the UPRTase family. Mg(2+) is required as a cofactor.

The catalysed reaction is UMP + diphosphate = 5-phospho-alpha-D-ribose 1-diphosphate + uracil. It participates in pyrimidine metabolism; UMP biosynthesis via salvage pathway; UMP from uracil: step 1/1. Its activity is regulated as follows. Allosterically activated by GTP. In terms of biological role, catalyzes the conversion of uracil and 5-phospho-alpha-D-ribose 1-diphosphate (PRPP) to UMP and diphosphate. The polypeptide is Uracil phosphoribosyltransferase (Shewanella putrefaciens (strain CN-32 / ATCC BAA-453)).